We begin with the raw amino-acid sequence, 492 residues long: Stage IV sporulation protein A (492 aa).

Positions 24–31 (GAVRTGKS) match the Walker A motif; involved in ATP-binding motif. Residue 24–31 (GAVRTGKS) participates in ATP binding.

Its subcellular location is the cytoplasm. It carries out the reaction ATP + H2O = ADP + phosphate + H(+). Functionally, ATPase. Has a role at an early stage in the morphogenesis of the spore coat outer layers. Directs the assembly of the coat and exosporium to an area around the forespore. The sequence is that of Stage IV sporulation protein A from Bacillus anthracis.